Here is a 667-residue protein sequence, read N- to C-terminus: Protein-glutamine gamma-glutamyltransferase 4 (667 aa).

Asn151, Asn220, and Asn227 each carry an N-linked (GlcNAc...) asparagine glycan. Active-site residues include Cys256, His315, and Asp338. 2 residues coordinate Ca(2+): Asn378 and Asp380. A glycan (N-linked (GlcNAc...) asparagine) is linked at Asn408. Residues Glu430 and Glu435 each contribute to the Ca(2+) site. Residues 430–449 are disordered; it reads EGSPEERKAMEKASGKRPDD. Residues Asn472 and Asn488 are each glycosylated (N-linked (GlcNAc...) asparagine).

Belongs to the transglutaminase superfamily. Transglutaminase family. In terms of assembly, homodimer. Requires Ca(2+) as cofactor. The N-terminus is blocked. Post-translationally, probably linked to the cell membrane via a lipid-anchor, possibly a GPI-anchor. In terms of processing, N-glycosylated on 2 Asn residues by a high mannose oligosaccharide consisting of five mannose residues and a fucosylated biantennary complex glycan. Expressed in the coagulating gland, the dorsal part of the prostate and in semen (at protein level). Expressed at low levels in the lateral prostate and seminal vesicle. Not expressed in the epididymis, kidney, liver, serum, sperm plug, testes and ventral prostate.

The protein localises to the secreted. It is found in the cell membrane. The enzyme catalyses L-glutaminyl-[protein] + L-lysyl-[protein] = [protein]-L-lysyl-N(6)-5-L-glutamyl-[protein] + NH4(+). Functionally, associated with the mammalian reproductive process. Plays an important role in the formation of the seminal coagulum through the cross-linking of specific proteins present in the seminal plasma. Transglutaminase is also required to stabilize the copulatory plug. The sequence is that of Protein-glutamine gamma-glutamyltransferase 4 (Tgm4) from Rattus norvegicus (Rat).